The following is a 304-amino-acid chain: Oxygen-dependent coproporphyrinogen-III oxidase (304 aa).

A substrate-binding site is contributed by Ser94. A divalent metal cation-binding residues include His98 and His108. The Proton donor role is filled by His108. 110–112 (NVR) serves as a coordination point for substrate. Positions 147 and 177 each coordinate a divalent metal cation. The tract at residues 242–277 (YVEFNLVYDRGTLFGLQTGGRTESILMSMPPLVRWE) is important for dimerization. Residue 260-262 (GGR) coordinates substrate.

It belongs to the aerobic coproporphyrinogen-III oxidase family. Homodimer. A divalent metal cation is required as a cofactor.

It is found in the cytoplasm. The catalysed reaction is coproporphyrinogen III + O2 + 2 H(+) = protoporphyrinogen IX + 2 CO2 + 2 H2O. The protein operates within porphyrin-containing compound metabolism; protoporphyrin-IX biosynthesis; protoporphyrinogen-IX from coproporphyrinogen-III (O2 route): step 1/1. In terms of biological role, involved in the heme biosynthesis. Catalyzes the aerobic oxidative decarboxylation of propionate groups of rings A and B of coproporphyrinogen-III to yield the vinyl groups in protoporphyrinogen-IX. In Shewanella pealeana (strain ATCC 700345 / ANG-SQ1), this protein is Oxygen-dependent coproporphyrinogen-III oxidase.